The following is a 294-amino-acid chain: Diaminopimelate epimerase (294 aa).

The substrate site is built by Asn11 and Asn78. The active-site Proton donor is the Cys87. Substrate is bound by residues 88 to 89 (GN), Asn167, Asn203, and 221 to 222 (ER). Residue Cys230 is the Proton acceptor of the active site. 231 to 232 (GT) lines the substrate pocket.

The protein belongs to the diaminopimelate epimerase family. As to quaternary structure, homodimer.

The protein resides in the cytoplasm. It catalyses the reaction (2S,6S)-2,6-diaminopimelate = meso-2,6-diaminopimelate. It functions in the pathway amino-acid biosynthesis; L-lysine biosynthesis via DAP pathway; DL-2,6-diaminopimelate from LL-2,6-diaminopimelate: step 1/1. Functionally, catalyzes the stereoinversion of LL-2,6-diaminopimelate (L,L-DAP) to meso-diaminopimelate (meso-DAP), a precursor of L-lysine and an essential component of the bacterial peptidoglycan. The polypeptide is Diaminopimelate epimerase (Mycolicibacterium paratuberculosis (strain ATCC BAA-968 / K-10) (Mycobacterium paratuberculosis)).